A 119-amino-acid polypeptide reads, in one-letter code: Large ribosomal subunit protein uL18 (119 aa).

The disordered stretch occupies residues 1-25 (MITKIDKNKVRKKRHARVRSKISGT). Positions 9–20 (KVRKKRHARVRS) are enriched in basic residues.

It belongs to the universal ribosomal protein uL18 family. As to quaternary structure, part of the 50S ribosomal subunit; part of the 5S rRNA/L5/L18/L25 subcomplex. Contacts the 5S and 23S rRNAs.

In terms of biological role, this is one of the proteins that bind and probably mediate the attachment of the 5S RNA into the large ribosomal subunit, where it forms part of the central protuberance. The protein is Large ribosomal subunit protein uL18 of Listeria monocytogenes serotype 4b (strain CLIP80459).